Consider the following 598-residue polypeptide: Elongation factor 4 (598 aa).

Residues 3 to 185 (QHIRNFSIIA…MIVAQIPPPE (183 aa)) enclose the tr-type G domain. GTP-binding positions include 15–20 (DHGKST) and 132–135 (NKID).

Belongs to the TRAFAC class translation factor GTPase superfamily. Classic translation factor GTPase family. LepA subfamily.

It localises to the cell inner membrane. It catalyses the reaction GTP + H2O = GDP + phosphate + H(+). Functionally, required for accurate and efficient protein synthesis under certain stress conditions. May act as a fidelity factor of the translation reaction, by catalyzing a one-codon backward translocation of tRNAs on improperly translocated ribosomes. Back-translocation proceeds from a post-translocation (POST) complex to a pre-translocation (PRE) complex, thus giving elongation factor G a second chance to translocate the tRNAs correctly. Binds to ribosomes in a GTP-dependent manner. In Nitrosomonas europaea (strain ATCC 19718 / CIP 103999 / KCTC 2705 / NBRC 14298), this protein is Elongation factor 4.